The primary structure comprises 984 residues: Serine/threonine-protein kinase Nek9 (984 aa).

An N-acetylserine modification is found at Ser2. A phosphoserine mark is found at Ser2, Ser13, Ser16, and Ser20. A disordered region spans residues 14–43 (INSDFGSESGGGGDSGPGPSAVPGPRAGGG). Tyr52 is modified (phosphotyrosine). Positions 52–308 (YIPIRVLGRG…ADALLDLPLL (257 aa)) constitute a Protein kinase domain. 58–66 (LGRGAFGEA) lines the ATP pocket. Ser76 carries the phosphoserine modification. Lys81 is a binding site for ATP. The active-site Proton acceptor is the Asp176. Thr210 bears the Phosphothreonine; by autocatalysis mark. At Thr254 the chain carries Phosphothreonine. At Ser331 the chain carries Phosphoserine. Phosphothreonine is present on Thr333. 6 RCC1 repeats span residues 388-444 (KELY…VTDE), 445-498 (GQLY…LTRN), 499-550 (KEVY…LTQS), 551-615 (GKVL…IDER), 616-668 (GRLL…ATDD), and 669-726 (NHIF…IVEK). Residues 732 to 896 (TIRSNSSGLS…GKALTSAACA (165 aa)) form an interaction with NEK6 region. The residue at position 741 (Ser741) is a Phosphoserine. Residues 744-790 (TVVQSSSPGGGIGGGGGGGGGGGGEEEDSQQESETPDPSGGFRGTME) form a disordered region. The span at 751 to 766 (PGGGIGGGGGGGGGGG) shows a compositional bias: gly residues. Over residues 767-778 (GEEEDSQQESET) the composition is skewed to acidic residues. 2 positions are modified to phosphoserine: Ser808 and Ser839. The residue at position 891 (Thr891) is a Phosphothreonine. The stretch at 896-945 (ACSALQVEVDRLQALVLKCLEEQQKLQQENLQMFTQLQKLNKKLEGGQQV) forms a coiled coil. Positions 940–984 (EGGQQVGMHSRGTQTAKEEMEMDPKPDLDSESWCLLGTDSCRPSL) are disordered. The residue at position 949 (Ser949) is a Phosphoserine. Residues 955 to 967 (AKEEMEMDPKPDL) are compositionally biased toward basic and acidic residues. Ser983 is modified (phosphoserine).

The protein belongs to the protein kinase superfamily. NEK Ser/Thr protein kinase family. NIMA subfamily. Homodimer; homodimerization is required to activate NEK7. Binds to Ran GTPase. Has a greater affinity for Ran-GDP over Ran-GTP. Interacts with SSRP1 and SUPT16H, the 2 subunits of the FACT complex. Interacts with DYNLL1; phosphorylation at Ser-949 strongly reduces DYNLL1 binding. Mg(2+) is required as a cofactor. In terms of processing, autophosphorylated on serine and threonine residues. When complexed with FACT, exhibits markedly elevated phosphorylation on Thr-210. During mitosis, not phosphorylated on Thr-210. Phosphorylated by CDK1 in vitro.

The protein localises to the cytoplasm. The protein resides in the nucleus. It catalyses the reaction L-seryl-[protein] + ATP = O-phospho-L-seryl-[protein] + ADP + H(+). It carries out the reaction L-threonyl-[protein] + ATP = O-phospho-L-threonyl-[protein] + ADP + H(+). Its activity is regulated as follows. Activated during mitosis by intramolecular autophosphorylation. Activity and autophosphorylation is activated by manganese &gt;&gt; magnesium ions. It is not cell-cycle regulated but activity is higher in G0-arrested cells. Its function is as follows. Pleiotropic regulator of mitotic progression, participating in the control of spindle dynamics and chromosome separation. Phosphorylates different histones, myelin basic protein, beta-casein, and BICD2. Phosphorylates histone H3 on serine and threonine residues and beta-casein on serine residues. Important for G1/S transition and S phase progression. Phosphorylates NEK6 and NEK7 and stimulates their activity by releasing the autoinhibitory functions of Tyr-108 and Tyr-97 respectively. In Mus musculus (Mouse), this protein is Serine/threonine-protein kinase Nek9.